The chain runs to 767 residues: Photosystem I P700 chlorophyll a apoprotein A1 (767 aa).

8 helical membrane-spanning segments follow: residues 72–95 (IFSA…FHGA), 158–181 (LMAL…FHYH), 197–221 (LNHH…HVSA), 305–323 (IAHH…GHMY), 364–387 (WHAQ…QHMY), 403–429 (IGLF…IAMV), 451–473 (AIIS…LYIH), and 548–566 (FMVH…LILL). [4Fe-4S] cluster contacts are provided by C590 and C599. 2 helical membrane passes run 606–627 (HVFL…HFSW) and 681–703 (TAAY…MFLF). H692 serves as a coordination point for chlorophyll a'. Chlorophyll a contacts are provided by M700 and Y708. Position 709 (W709) interacts with phylloquinone. Residues 741 to 761 (AVGVAHYLLGGIATTWAFFHA) form a helical membrane-spanning segment.

The protein belongs to the PsaA/PsaB family. In terms of assembly, the PsaA/B heterodimer binds the P700 chlorophyll special pair and subsequent electron acceptors. PSI consists of a core antenna complex that captures photons, and an electron transfer chain that converts photonic excitation into a charge separation. The cyanobacterial PSI reaction center is composed of one copy each of PsaA,B,C,D,E,F,I,J,K,L,M and X, and forms trimeric complexes. It depends on PSI electron transfer chain: 5 chlorophyll a, 1 chlorophyll a', 2 phylloquinones and 3 4Fe-4S clusters. PSI core antenna: 90 chlorophyll a, 22 carotenoids, 3 phospholipids and 1 galactolipid. P700 is a chlorophyll a/chlorophyll a' dimer, A0 is one or more chlorophyll a, A1 is one or both phylloquinones and FX is a shared 4Fe-4S iron-sulfur center. as a cofactor.

The protein resides in the cellular thylakoid membrane. It carries out the reaction reduced [plastocyanin] + hnu + oxidized [2Fe-2S]-[ferredoxin] = oxidized [plastocyanin] + reduced [2Fe-2S]-[ferredoxin]. PsaA and PsaB bind P700, the primary electron donor of photosystem I (PSI), as well as the electron acceptors A0, A1 and FX. PSI is a plastocyanin/cytochrome c6-ferredoxin oxidoreductase, converting photonic excitation into a charge separation, which transfers an electron from the donor P700 chlorophyll pair to the spectroscopically characterized acceptors A0, A1, FX, FA and FB in turn. Oxidized P700 is reduced on the lumenal side of the thylakoid membrane by plastocyanin or cytochrome c6. This chain is Photosystem I P700 chlorophyll a apoprotein A1, found in Synechococcus sp. (strain CC9605).